We begin with the raw amino-acid sequence, 911 residues long: DNA ligase 4 (911 aa).

Residues Glu-271, Thr-272, Lys-273, Leu-274, Arg-278, Glu-331, Lys-345, Phe-367, Glu-427, Lys-432, Lys-449, and Lys-451 each coordinate ATP. Residue Lys-273 is the N6-AMP-lysine intermediate of the active site. Glu-331 serves as a coordination point for Mg(2+). Glu-427 lines the Mg(2+) pocket. The interval 610–620 (LASKHLYIGGD) is required for catalytic activity. 2 consecutive BRCT domains span residues 654–743 (KISN…PRFM) and 808–911 (SPLS…QYLI).

It belongs to the ATP-dependent DNA ligase family. Interacts with XRCC4; the LIG4-XRCC4 subcomplex has a 1:2 stoichiometry and XRCC4 is required for LIG4 stability. Component of the core long-range non-homologous end joining (NHEJ) complex (also named DNA-PK complex) composed of PRKDC, LIG4, XRCC4, XRCC6/Ku70, XRCC5/Ku86 and NHEJ1/XLF. Additional component of the NHEJ complex includes PAXX. Following autophosphorylation, PRKDC dissociates from DNA, leading to formation of the short-range NHEJ complex, composed of LIG4, XRCC4, XRCC6/Ku70, XRCC5/Ku86 and NHEJ1/XLF. Interacts with DCLRE1C; the interaction is direct. Interacts with APLF. It depends on Mg(2+) as a cofactor. Testis, thymus, prostate and heart.

Its subcellular location is the nucleus. It catalyses the reaction ATP + (deoxyribonucleotide)n-3'-hydroxyl + 5'-phospho-(deoxyribonucleotide)m = (deoxyribonucleotide)n+m + AMP + diphosphate.. DNA ligase involved in DNA non-homologous end joining (NHEJ); required for double-strand break (DSB) repair and V(D)J recombination. Catalyzes the NHEJ ligation step of the broken DNA during DSB repair by resealing the DNA breaks after the gap filling is completed. Joins single-strand breaks in a double-stranded polydeoxynucleotide in an ATP-dependent reaction. LIG4 is mechanistically flexible: it can ligate nicks as well as compatible DNA overhangs alone, while in the presence of XRCC4, it can ligate ends with 2-nucleotides (nt) microhomology and 1-nt gaps. Forms a subcomplex with XRCC4; the LIG4-XRCC4 subcomplex is responsible for the NHEJ ligation step and XRCC4 enhances the joining activity of LIG4. Binding of the LIG4-XRCC4 complex to DNA ends is dependent on the assembly of the DNA-dependent protein kinase complex DNA-PK to these DNA ends. LIG4 regulates nuclear localization of XRCC4. The sequence is that of DNA ligase 4 from Homo sapiens (Human).